The sequence spans 559 residues: Formate--tetrahydrofolate ligase (559 aa).

68-75 (TPAGEGKT) contacts ATP.

The protein belongs to the formate--tetrahydrofolate ligase family.

It carries out the reaction (6S)-5,6,7,8-tetrahydrofolate + formate + ATP = (6R)-10-formyltetrahydrofolate + ADP + phosphate. The protein operates within one-carbon metabolism; tetrahydrofolate interconversion. The polypeptide is Formate--tetrahydrofolate ligase (Mesorhizobium japonicum (strain LMG 29417 / CECT 9101 / MAFF 303099) (Mesorhizobium loti (strain MAFF 303099))).